We begin with the raw amino-acid sequence, 321 residues long: Tyrosine recombinase XerC (321 aa).

A Core-binding (CB) domain is found at 16 to 107 (SDIGQQIVRW…GLRSFARFLE (92 aa)). The Tyr recombinase domain maps to 128–315 (SVPKPIHMSA…DSERLLDVYR (188 aa)). Residues R173, K199, H267, R270, and H293 contribute to the active site. The active-site O-(3'-phospho-DNA)-tyrosine intermediate is Y302.

Belongs to the 'phage' integrase family. XerC subfamily. In terms of assembly, forms a cyclic heterotetrameric complex composed of two molecules of XerC and two molecules of XerD.

It localises to the cytoplasm. Its function is as follows. Site-specific tyrosine recombinase, which acts by catalyzing the cutting and rejoining of the recombining DNA molecules. The XerC-XerD complex is essential to convert dimers of the bacterial chromosome into monomers to permit their segregation at cell division. It also contributes to the segregational stability of plasmids. This is Tyrosine recombinase XerC from Nitrobacter winogradskyi (strain ATCC 25391 / DSM 10237 / CIP 104748 / NCIMB 11846 / Nb-255).